A 62-amino-acid chain; its full sequence is RRCFNHPSSQPQTNKSCPPGENSCYNKQWRDHRGTIIERGCGCPTVKPGIKLRCCQSDDCNN.

Positions 1–16 (RRCFNHPSSQPQTNKS) are enriched in polar residues. Positions 1-21 (RRCFNHPSSQPQTNKSCPPGE) are disordered. Cystine bridges form between cysteine 3–cysteine 24, cysteine 17–cysteine 41, cysteine 43–cysteine 54, and cysteine 55–cysteine 60.

The protein belongs to the three-finger toxin family. Short-chain subfamily. Type I alpha-neurotoxin sub-subfamily. As to expression, expressed by the venom gland.

The protein localises to the secreted. In terms of biological role, binds to muscle nicotinic acetylcholine receptor (nAChR) and inhibit acetylcholine from binding to the receptor, thereby impairing neuromuscular transmission. This Laticauda crockeri (Crocker's sea snake) protein is Short neurotoxin A.